Consider the following 360-residue polypeptide: Photosystem II protein D1 (360 aa).

Transmembrane regions (helical) follow at residues 32–49 (YLGW…SATF), 121–136 (HFFI…EWEL), and 145–159 (WIFV…AASA). Residue His-121 participates in chlorophyll a binding. Residue Tyr-129 participates in pheophytin a binding. The [CaMn4O5] cluster site is built by Asp-173 and Glu-192. The chain crosses the membrane as a helical span at residues 200–221 (LHMFGVAAVFGGSLFSAMHGSL). Position 201 (His-201) interacts with chlorophyll a. A quinone-binding positions include His-218 and 267 to 268 (SF). Residue His-218 participates in Fe cation binding. His-275 contributes to the Fe cation binding site. Residues 277-291 (FLGAWPVVGIWLTAM) form a helical membrane-spanning segment. Residues His-335, Glu-336, Asp-345, and Ala-347 each coordinate [CaMn4O5] cluster. Positions 348–360 (CANCLLSLWPMVG) are excised as a propeptide.

Belongs to the reaction center PufL/M/PsbA/D family. As to quaternary structure, PSII is composed of 1 copy each of membrane proteins PsbA, PsbB, PsbC, PsbD, PsbE, PsbF, PsbH, PsbI, PsbJ, PsbK, PsbL, PsbM, PsbT, PsbX, PsbY, PsbZ, Psb30/Ycf12, at least 3 peripheral proteins of the oxygen-evolving complex and a large number of cofactors. It forms dimeric complexes. The cofactor is The D1/D2 heterodimer binds P680, chlorophylls that are the primary electron donor of PSII, and subsequent electron acceptors. It shares a non-heme iron and each subunit binds pheophytin, quinone, additional chlorophylls, carotenoids and lipids. D1 provides most of the ligands for the Mn4-Ca-O5 cluster of the oxygen-evolving complex (OEC). There is also a Cl(-1) ion associated with D1 and D2, which is required for oxygen evolution. The PSII complex binds additional chlorophylls, carotenoids and specific lipids.. Post-translationally, tyr-164 forms a radical intermediate that is referred to as redox-active TyrZ, YZ or Y-Z. In terms of processing, C-terminally processed by CtpA; processing is essential to allow assembly of the oxygen-evolving complex and thus photosynthetic growth.

The protein resides in the plastid. It localises to the chloroplast thylakoid membrane. It carries out the reaction 2 a plastoquinone + 4 hnu + 2 H2O = 2 a plastoquinol + O2. Photosystem II (PSII) is a light-driven water:plastoquinone oxidoreductase that uses light energy to abstract electrons from H(2)O, generating O(2) and a proton gradient subsequently used for ATP formation. It consists of a core antenna complex that captures photons, and an electron transfer chain that converts photonic excitation into a charge separation. The D1/D2 (PsbA/PsbD) reaction center heterodimer binds P680, the primary electron donor of PSII as well as several subsequent electron acceptors. This is Photosystem II protein D1 from Karenia mikimotoi (Red tide dinoflagellate).